The following is a 347-amino-acid chain: Holliday junction branch migration complex subunit RuvB (347 aa).

The segment at 13–195 is large ATPase domain (RuvB-L); sequence NEDAVTSGEV…FGIVEHMQYY (183 aa). ATP is bound by residues Leu-34, Arg-35, Gly-76, Lys-79, Thr-80, Thr-81, 142-144, Arg-185, Tyr-195, and Arg-232; that span reads EDY. Thr-80 is a binding site for Mg(2+). A small ATPAse domain (RuvB-S) region spans residues 196–266; that stretch reads TIDELEKIVQ…TTEGALKQLQ (71 aa). The segment at 269–347 is head domain (RuvB-H); sequence DEGLDQTDRR…QLGLPVPGDK (79 aa). Arg-329 provides a ligand contact to DNA.

This sequence belongs to the RuvB family. In terms of assembly, homohexamer. Forms an RuvA(8)-RuvB(12)-Holliday junction (HJ) complex. HJ DNA is sandwiched between 2 RuvA tetramers; dsDNA enters through RuvA and exits via RuvB. An RuvB hexamer assembles on each DNA strand where it exits the tetramer. Each RuvB hexamer is contacted by two RuvA subunits (via domain III) on 2 adjacent RuvB subunits; this complex drives branch migration. In the full resolvosome a probable DNA-RuvA(4)-RuvB(12)-RuvC(2) complex forms which resolves the HJ.

The protein resides in the cytoplasm. The enzyme catalyses ATP + H2O = ADP + phosphate + H(+). Its function is as follows. The RuvA-RuvB-RuvC complex processes Holliday junction (HJ) DNA during genetic recombination and DNA repair, while the RuvA-RuvB complex plays an important role in the rescue of blocked DNA replication forks via replication fork reversal (RFR). RuvA specifically binds to HJ cruciform DNA, conferring on it an open structure. The RuvB hexamer acts as an ATP-dependent pump, pulling dsDNA into and through the RuvAB complex. RuvB forms 2 homohexamers on either side of HJ DNA bound by 1 or 2 RuvA tetramers; 4 subunits per hexamer contact DNA at a time. Coordinated motions by a converter formed by DNA-disengaged RuvB subunits stimulates ATP hydrolysis and nucleotide exchange. Immobilization of the converter enables RuvB to convert the ATP-contained energy into a lever motion, pulling 2 nucleotides of DNA out of the RuvA tetramer per ATP hydrolyzed, thus driving DNA branch migration. The RuvB motors rotate together with the DNA substrate, which together with the progressing nucleotide cycle form the mechanistic basis for DNA recombination by continuous HJ branch migration. Branch migration allows RuvC to scan DNA until it finds its consensus sequence, where it cleaves and resolves cruciform DNA. The polypeptide is Holliday junction branch migration complex subunit RuvB (Lactobacillus helveticus (strain DPC 4571)).